We begin with the raw amino-acid sequence, 166 residues long: Lithostathine-1-beta (166 aa).

Residues 1–22 (MAQTNSFFMLISSLMFLSLSQG) form the signal peptide. Residue T27 is glycosylated (O-linked (GalNAc...) threonine). One can recognise a C-type lectin domain in the interval 34–164 (ISCPEGTNAY…EKKFSFVCKF (131 aa)). 3 cysteine pairs are disulfide-bonded: C36–C47, C64–C162, and C137–C154.

All O-linked glycans consist of Gal-GlcNAc-Gal-GalNAc tetrasaccharide core and get elongated (microheterogeneity).

The protein resides in the secreted. In terms of biological role, might act as an inhibitor of spontaneous calcium carbonate precipitation. May be associated with neuronal sprouting in brain, and with brain and pancreas regeneration. The polypeptide is Lithostathine-1-beta (REG1B) (Homo sapiens (Human)).